We begin with the raw amino-acid sequence, 181 residues long: Malignant T-cell-amplified sequence 2 (181 aa).

The region spanning 92 to 171 (LPHQQVDKGA…IGIENIHYLN (80 aa)) is the PUA domain.

This sequence belongs to the MCTS1 family.

The protein localises to the cytoplasm. The polypeptide is Malignant T-cell-amplified sequence 2 (Homo sapiens (Human)).